We begin with the raw amino-acid sequence, 242 residues long: tRNA pseudouridine synthase A (242 aa).

D51 (nucleophile) is an active-site residue. Y107 serves as a coordination point for substrate.

It belongs to the tRNA pseudouridine synthase TruA family. Homodimer.

It catalyses the reaction uridine(38/39/40) in tRNA = pseudouridine(38/39/40) in tRNA. In terms of biological role, formation of pseudouridine at positions 38, 39 and 40 in the anticodon stem and loop of transfer RNAs. This Helicobacter pylori (strain J99 / ATCC 700824) (Campylobacter pylori J99) protein is tRNA pseudouridine synthase A.